A 200-amino-acid chain; its full sequence is Large ribosomal subunit protein uL4 (200 aa).

The disordered stretch occupies residues 38-72 (GRQGTKQQKTRSDVAGGGKRPWRQKGTGRARAGTT).

The protein belongs to the universal ribosomal protein uL4 family. As to quaternary structure, part of the 50S ribosomal subunit.

One of the primary rRNA binding proteins, this protein initially binds near the 5'-end of the 23S rRNA. It is important during the early stages of 50S assembly. It makes multiple contacts with different domains of the 23S rRNA in the assembled 50S subunit and ribosome. Functionally, forms part of the polypeptide exit tunnel. This Pseudomonas putida (strain ATCC 700007 / DSM 6899 / JCM 31910 / BCRC 17059 / LMG 24140 / F1) protein is Large ribosomal subunit protein uL4.